The primary structure comprises 20 residues: Non-specific lipid-transfer protein (20 aa).

Belongs to the plant LTP family. As to expression, leaf.

Its function is as follows. Plant non-specific lipid-transfer proteins transfer phospholipids as well as galactolipids across membranes. May play a role in wax or cutin deposition in the cell walls of expanding epidermal cells and certain secretory tissues. The chain is Non-specific lipid-transfer protein from Cannabis sativa (Hemp).